A 334-amino-acid chain; its full sequence is tRNA N6-adenosine threonylcarbamoyltransferase (334 aa).

Fe cation is bound by residues His-112 and His-116. Residues Val-135–Gly-139, Asp-168, Gly-181, Asp-185, and Asn-274 each bind substrate. Asp-303 lines the Fe cation pocket.

The protein belongs to the KAE1 / TsaD family. Requires Fe(2+) as cofactor.

The protein resides in the cytoplasm. It carries out the reaction L-threonylcarbamoyladenylate + adenosine(37) in tRNA = N(6)-L-threonylcarbamoyladenosine(37) in tRNA + AMP + H(+). Its function is as follows. Required for the formation of a threonylcarbamoyl group on adenosine at position 37 (t(6)A37) in tRNAs that read codons beginning with adenine. Is involved in the transfer of the threonylcarbamoyl moiety of threonylcarbamoyl-AMP (TC-AMP) to the N6 group of A37, together with TsaE and TsaB. TsaD likely plays a direct catalytic role in this reaction. This is tRNA N6-adenosine threonylcarbamoyltransferase from Anaeromyxobacter dehalogenans (strain 2CP-1 / ATCC BAA-258).